We begin with the raw amino-acid sequence, 530 residues long: Autoinducer-2 kinase (530 aa).

This sequence belongs to the FGGY kinase family.

The protein resides in the cytoplasm. It catalyses the reaction (S)-4,5-dihydroxypentane-2,3-dione + ATP = (2S)-2-hydroxy-3,4-dioxopentyl phosphate + ADP + H(+). Its function is as follows. Catalyzes the phosphorylation of autoinducer-2 (AI-2) to phospho-AI-2, which subsequently inactivates the transcriptional regulator LsrR and leads to the transcription of the lsr operon. Phosphorylates the ring-open form of (S)-4,5-dihydroxypentane-2,3-dione (DPD), which is the precursor to all AI-2 signaling molecules, at the C5 position. This chain is Autoinducer-2 kinase, found in Yersinia pestis bv. Antiqua (strain Angola).